Here is an 807-residue protein sequence, read N- to C-terminus: F-box protein YLR352W (807 aa).

Residues 220 to 266 (LNDCIDLPSHVLWKILKMLPELQKLDLSHTSIDDSTLYHGIPHWKNL) enclose the F-box domain. Over residues 607–616 (DNNSHVEDSQ) the composition is skewed to basic and acidic residues. Disordered stretches follow at residues 607-647 (DNNS…NPFA) and 716-739 (HLFESSRSRSGNKTRPSLTGEHSS). Composition is skewed to polar residues over residues 627 to 644 (SLLSRPTLRSNNGSSSAN) and 723 to 736 (SRSGNKTRPSLTGE).

In terms of assembly, interacts with SKP1 and CDC53. Component of the probable SCF(YBR352W) complex containing CDC53, SKP1, RBX1 and YBR352W.

Its pathway is protein modification; protein ubiquitination. Its function is as follows. Substrate recognition component of a SCF (SKP1-CUL1-F-box protein) E3 ubiquitin-protein ligase complex which mediates the ubiquitination and subsequent proteasomal degradation of target proteins. Probably recognizes and binds to phosphorylated target proteins. This Saccharomyces cerevisiae (strain ATCC 204508 / S288c) (Baker's yeast) protein is F-box protein YLR352W.